The primary structure comprises 348 residues: Flagellar P-ring protein (348 aa).

The signal sequence occupies residues 1 to 16 (MRVLTIFLLFMTSIFA).

The protein belongs to the FlgI family. The basal body constitutes a major portion of the flagellar organelle and consists of four rings (L,P,S, and M) mounted on a central rod.

The protein resides in the periplasm. Its subcellular location is the bacterial flagellum basal body. Assembles around the rod to form the L-ring and probably protects the motor/basal body from shearing forces during rotation. This Campylobacter jejuni subsp. doylei (strain ATCC BAA-1458 / RM4099 / 269.97) protein is Flagellar P-ring protein.